The following is a 588-amino-acid chain: Probable fumarate reductase Ifc3 (588 aa).

The first 22 residues, 1-22 (MKLKYLVSAMALVVLSSGTAMA), serve as a signal peptide directing secretion. 17 residues coordinate heme c: H31, C37, C40, H41, C58, C61, H62, H78, H81, C87, C90, H91, G93, H94, C101, C104, and H105. A flavoprotein-like region spans residues 135–588 (AIAAGPSETT…DNAAKHALDK (454 aa)). Residues A154, D173, N181, S182, G187, and G188 each contribute to the FAD site. G187 serves as a coordination point for fumarate. Position 187 (G187) interacts with succinate. Position 218 (R218) interacts with heme c. FAD is bound by residues V295 and D361. The succinate site is built by H382, S394, and E395. Fumarate contacts are provided by S394 and E395. Catalysis depends on R419, which acts as the Proton donor. Residue H521 coordinates fumarate. Position 521 (H521) interacts with succinate. E551 contacts FAD. The fumarate site is built by R561 and G564. Positions 561 and 564 each coordinate succinate. Positions 564, 566, and 567 each coordinate FAD.

Homodimer. The cofactor is FAD. It depends on heme c as a cofactor.

The protein localises to the periplasm. Its function is as follows. Flavocytochrome that catalyzes the reduction of fumarate to succinate in vitro. Is essentially unidirectional, catalyzing only fumarate reduction. In vitro, can use the artificial electron donor methyl viologen. May be involved in an alternative route for electron transport to Fe(3+). The polypeptide is Probable fumarate reductase Ifc3 (Shewanella frigidimarina (strain NCIMB 400)).